We begin with the raw amino-acid sequence, 286 residues long: Bifunctional protein FolD (286 aa).

NADP(+) is bound by residues 166 to 168 and I232; that span reads GAS.

This sequence belongs to the tetrahydrofolate dehydrogenase/cyclohydrolase family. Homodimer.

The enzyme catalyses (6R)-5,10-methylene-5,6,7,8-tetrahydrofolate + NADP(+) = (6R)-5,10-methenyltetrahydrofolate + NADPH. It carries out the reaction (6R)-5,10-methenyltetrahydrofolate + H2O = (6R)-10-formyltetrahydrofolate + H(+). It functions in the pathway one-carbon metabolism; tetrahydrofolate interconversion. Its function is as follows. Catalyzes the oxidation of 5,10-methylenetetrahydrofolate to 5,10-methenyltetrahydrofolate and then the hydrolysis of 5,10-methenyltetrahydrofolate to 10-formyltetrahydrofolate. In Shewanella denitrificans (strain OS217 / ATCC BAA-1090 / DSM 15013), this protein is Bifunctional protein FolD.